Consider the following 919-residue polypeptide: Isoleucine--tRNA ligase (919 aa).

The 'HIGH' region signature appears at 57–67 (PYANGHIHIGT). Residue E553 coordinates L-isoleucyl-5'-AMP. Residues 594-598 (KMSKS) carry the 'KMSKS' region motif. Residue K597 participates in ATP binding. Residues C887, C890, C907, and C910 each contribute to the Zn(2+) site.

This sequence belongs to the class-I aminoacyl-tRNA synthetase family. IleS type 1 subfamily. In terms of assembly, monomer. It depends on Zn(2+) as a cofactor.

It is found in the cytoplasm. The catalysed reaction is tRNA(Ile) + L-isoleucine + ATP = L-isoleucyl-tRNA(Ile) + AMP + diphosphate. Catalyzes the attachment of isoleucine to tRNA(Ile). As IleRS can inadvertently accommodate and process structurally similar amino acids such as valine, to avoid such errors it has two additional distinct tRNA(Ile)-dependent editing activities. One activity is designated as 'pretransfer' editing and involves the hydrolysis of activated Val-AMP. The other activity is designated 'posttransfer' editing and involves deacylation of mischarged Val-tRNA(Ile). This is Isoleucine--tRNA ligase from Thermotoga maritima (strain ATCC 43589 / DSM 3109 / JCM 10099 / NBRC 100826 / MSB8).